The sequence spans 170 residues: E1B protein, small T-antigen (170 aa).

It belongs to the adenoviridae E1B 19 kDa protein family.

The chain is E1B protein, small T-antigen from Canine adenovirus serotype 2 (CAdV-2).